A 184-amino-acid chain; its full sequence is Inactive cytochrome P450 monooxygenase lolP2 (184 aa).

A helical membrane pass occupies residues 10-30 (GIVWLTVAAIAISYILQSSFL). The disordered stretch occupies residues 161–184 (RRTRGSRPRSRPRWMPARWSRSSP). Residues 163–172 (TRGSRPRSRP) show a composition bias toward basic residues. A compositionally biased stretch (low complexity) spans 173-184 (RWMPARWSRSSP).

This sequence belongs to the cytochrome P450 family.

Its subcellular location is the membrane. In terms of biological role, cytochrome P450 monooxygenase; part of the gene cluster that mediates the biosynthesis of loline alkaloids, potent insecticidal agents composed of a pyrrolizidine ring system and an uncommon ether bridge linking carbons 2 and 7. Lolines are structurally differentiated by the various modifications of the L-amino group and include norloline, loline, N-methylloline, N-acetylloline, N-acetylnorloline, and N-formylloline. The first committed step is the condensation of O-acetyl-L-homoserine (derived from L-aspartic acid) and L-proline, probably catalyzed by the gamma-type pyridoxal 5'-phosphate(PLP)-dependent enzyme lolC, to give the diamino diacid, NACPP. Ensuing cyclization, decarboxylation, and acetylation steps yield 1-exo-acetamidopyrrolizidine (AcAP). LolO is required for installation of the ether bridge upon the pathway intermediate, 1-exo-acetamidopyrrolizidine (AcAP). In sequential 2-oxoglutarate- and O(2)-consuming steps, lolO removes hydrogens from C2 and C7 of AcAP to form both carbon-oxygen bonds in N-acetylnorloline (NANL), the precursor to all other lolines. The enzymes lolD, lolE, lolF and lolT have also been proposed to be involved in the ether-bridge installation. Further processing of the exocyclic moiety of NANL by fungal N-acetamidase (LolN), methyltransferase (LolM), and cytochrome P450 (LolP) enzymes, with occasional involvement of a plant acetyltransferase, generates the other known lolines. LolN transforms NANL to norlonine which is monomethylated and dimethylated to respectively lonine and N-methyllonine (NML) by lolM. LolP catalyzes hydroxylation of the methyl group in N-methylloline (NML) and further oxygenation to N-formylloline (NFL). A plant acetyltransferase is responsible for the acetylation of loline to form N-acetylloline (NAL). LolA might interact with aspartate kinase to prevent feedback inhibition of its activity by these end products and thereby promote production of L-homoserine from L-aspartate. The protein is Inactive cytochrome P450 monooxygenase lolP2 of Epichloe uncinata (Endophyte fungus).